A 303-amino-acid chain; its full sequence is Probable serine acetyltransferase 1 (303 aa).

2 disordered regions span residues 1–36 (MTAGQPLRDDPQPRRHSPPALHPAVVPAYPPPESDA) and 271–290 (NPARLLGGKKGDDMPGESMD).

The protein belongs to the transferase hexapeptide repeat family. In terms of assembly, homomultimer.

The catalysed reaction is L-serine + acetyl-CoA = O-acetyl-L-serine + CoA. It functions in the pathway amino-acid biosynthesis; L-cysteine biosynthesis; L-cysteine from L-serine: step 1/2. This Oryza sativa subsp. japonica (Rice) protein is Probable serine acetyltransferase 1 (SAT1).